The chain runs to 343 residues: Adenine deaminase (343 aa).

3 residues coordinate Zn(2+): His17, His19, and His197. Catalysis depends on Glu200, which acts as the Proton donor. Asp278 serves as a coordination point for Zn(2+). Substrate is bound at residue Asp279.

It belongs to the metallo-dependent hydrolases superfamily. Adenosine and AMP deaminases family. Adenine deaminase type 2 subfamily. Requires Zn(2+) as cofactor.

The enzyme catalyses adenine + H2O + H(+) = hypoxanthine + NH4(+). In terms of biological role, catalyzes the hydrolytic deamination of adenine to hypoxanthine. Plays an important role in the purine salvage pathway and in nitrogen catabolism. The polypeptide is Adenine deaminase (Rhodopseudomonas palustris (strain BisB18)).